Reading from the N-terminus, the 390-residue chain is MPININKFILDMERFDGTLKKYPEDFIVEEITPEGTVLEVGKEIGFEDVEKWHGSFIHFTVEKTNWNTMDALKQIVRTTKTKRKNFGFAGTKDKFAVTTQRFGCFGLKKEQLENINIKDIVIRDVQKSNKKLRMGDLWGNKFTIKIRGLDLSKKEIKRISDLKLDYVLNYYGIQRFGLIRPITHIVGKFIYERDFESAFYTYCGTPISETGDSLEARQLVDVGEFKKALKLFNRNHDYEKRLIQQYLKYKDFKMAFTALPPQLNSMFVNAYQAYLFNEMINKRFEYGFDAKEGDILEDNTPTGTLIGYNTEFSGGIQGEIEKEIVERENLDLKKFKIEDFGNFYGTRRKMITPIYDFKSSFENDIFELSFKLERGNYATIVTREFTGNLS.

Asp93 serves as the catalytic Nucleophile. One can recognise a TRUD domain in the interval 166 to 353 (YVLNYYGIQR…YGTRRKMITP (188 aa)).

The protein belongs to the pseudouridine synthase TruD family.

It catalyses the reaction uridine(13) in tRNA = pseudouridine(13) in tRNA. In terms of biological role, could be responsible for synthesis of pseudouridine from uracil-13 in transfer RNAs. The chain is Probable tRNA pseudouridine synthase D from Methanococcus maripaludis (strain C5 / ATCC BAA-1333).